We begin with the raw amino-acid sequence, 243 residues long: Derlin-1.1 (243 aa).

Over 1 to 20 the chain is Cytoplasmic; that stretch reads MSSPAEYYKSLPPISKAYGT. A helical transmembrane segment spans residues 21–41; that stretch reads LCFFTTVLVQLQILHPLFLYL. Over 42-55 the chain is Lumenal; the sequence is DYPLVFKKFEIWRL. A helical transmembrane segment spans residues 56–76; it reads LTSFFFLAPFSMKFGIRLLMI. The Cytoplasmic segment spans residues 77–94; that stretch reads ARYGVMLEKGAFDKRTAD. Residues 95 to 115 form a helical membrane-spanning segment; the sequence is FLWMMIFGAISLLVLSIIPLF. At 116–157 the chain is on the lumenal side; that stretch reads NSFFLGIPMVSMLLYVWSRENPNAQINIYGLVQLRSFYLPWA. The helical transmembrane segment at 158 to 178 threads the bilayer; it reads MLLLDVIFGSSLMPGLLGIMV. Over 179–243 the chain is Cytoplasmic; that stretch reads GHLYYFFAVL…FRGRSYRLNQ (65 aa). The tract at residues 219–243 is disordered; sequence SPVRPPANGNSGSGVFRGRSYRLNQ.

The protein belongs to the derlin family. In terms of tissue distribution, expressed in roots, stalks, leaves, immature ears, embryo and endosperm.

It localises to the endoplasmic reticulum membrane. May be involved in the degradation process of specific misfolded endoplasmic reticulum (ER) luminal proteins. This is Derlin-1.1 (DER1.1) from Zea mays (Maize).